The chain runs to 121 residues: Large ribosomal subunit protein uL18 (121 aa).

Belongs to the universal ribosomal protein uL18 family. As to quaternary structure, part of the 50S ribosomal subunit; part of the 5S rRNA/L5/L18/L25 subcomplex. Contacts the 5S and 23S rRNAs.

This is one of the proteins that bind and probably mediate the attachment of the 5S RNA into the large ribosomal subunit, where it forms part of the central protuberance. This is Large ribosomal subunit protein uL18 from Paraburkholderia phytofirmans (strain DSM 17436 / LMG 22146 / PsJN) (Burkholderia phytofirmans).